Reading from the N-terminus, the 261-residue chain is Glutamate 5-kinase (261 aa).

Residue Lys-7 coordinates ATP. Residues Ser-46, Asp-131, and Asn-147 each contribute to the substrate site. Residues 167-168 (SD) and 209-215 (TGGIVTK) contribute to the ATP site.

It belongs to the glutamate 5-kinase family.

It is found in the cytoplasm. It carries out the reaction L-glutamate + ATP = L-glutamyl 5-phosphate + ADP. It functions in the pathway amino-acid biosynthesis; L-proline biosynthesis; L-glutamate 5-semialdehyde from L-glutamate: step 1/2. Its function is as follows. Catalyzes the transfer of a phosphate group to glutamate to form L-glutamate 5-phosphate. This Wolinella succinogenes (strain ATCC 29543 / DSM 1740 / CCUG 13145 / JCM 31913 / LMG 7466 / NCTC 11488 / FDC 602W) (Vibrio succinogenes) protein is Glutamate 5-kinase.